A 290-amino-acid polypeptide reads, in one-letter code: Elongation factor Ts (290 aa).

Residues 82–85 (TDFV) are involved in Mg(2+) ion dislocation from EF-Tu.

It belongs to the EF-Ts family.

The protein resides in the cytoplasm. Functionally, associates with the EF-Tu.GDP complex and induces the exchange of GDP to GTP. It remains bound to the aminoacyl-tRNA.EF-Tu.GTP complex up to the GTP hydrolysis stage on the ribosome. The chain is Elongation factor Ts from Cellvibrio japonicus (strain Ueda107) (Pseudomonas fluorescens subsp. cellulosa).